Here is a 412-residue protein sequence, read N- to C-terminus: Short-chain specific acyl-CoA dehydrogenase, mitochondrial (412 aa).

The N-terminal 24 residues, 1–24 (MAAALLARARGPLRRALGVRDWRR), are a transit peptide targeting the mitochondrion. Position 27 is a phosphothreonine (threonine 27). Lysine 51 is subject to N6-acetyllysine; alternate. Position 51 is an N6-succinyllysine; alternate (lysine 51). Lysine 72 carries the post-translational modification N6-acetyllysine. An N6-acetyllysine; alternate modification is found at lysine 129. Lysine 129 is subject to N6-succinyllysine; alternate. Residues 152–161 (FALSEPGNGS) and 185–187 (WIT) contribute to the FAD site. Serine 161 provides a ligand contact to substrate. Residue lysine 208 is modified to N6-acetyllysine. Lysine 262 carries the post-translational modification N6-acetyllysine; alternate. Lysine 262 carries the N6-succinyllysine; alternate modification. 269-272 (DMGR) serves as a coordination point for substrate. N6-acetyllysine is present on lysine 292. Arginine 297 lines the FAD pocket. An N6-acetyllysine; alternate modification is found at lysine 306. N6-succinyllysine; alternate is present on lysine 306. FAD-binding positions include glutamine 308 and 365–369 (QILGG). Catalysis depends on glutamate 392, which acts as the Proton acceptor. Glycine 393 is a substrate binding site. FAD is bound at residue 394–396 (TSE).

It belongs to the acyl-CoA dehydrogenase family. Homotetramer. It depends on FAD as a cofactor.

The protein resides in the mitochondrion matrix. The enzyme catalyses a short-chain 2,3-saturated fatty acyl-CoA + oxidized [electron-transfer flavoprotein] + H(+) = a short-chain (2E)-enoyl-CoA + reduced [electron-transfer flavoprotein]. The catalysed reaction is butanoyl-CoA + oxidized [electron-transfer flavoprotein] + H(+) = (2E)-butenoyl-CoA + reduced [electron-transfer flavoprotein]. It catalyses the reaction pentanoyl-CoA + oxidized [electron-transfer flavoprotein] + H(+) = (2E)-pentenoyl-CoA + reduced [electron-transfer flavoprotein]. It carries out the reaction hexanoyl-CoA + oxidized [electron-transfer flavoprotein] + H(+) = (2E)-hexenoyl-CoA + reduced [electron-transfer flavoprotein]. It functions in the pathway lipid metabolism; mitochondrial fatty acid beta-oxidation. In terms of biological role, short-chain specific acyl-CoA dehydrogenase is one of the acyl-CoA dehydrogenases that catalyze the first step of mitochondrial fatty acid beta-oxidation, an aerobic process breaking down fatty acids into acetyl-CoA and allowing the production of energy from fats. The first step of fatty acid beta-oxidation consists in the removal of one hydrogen from C-2 and C-3 of the straight-chain fatty acyl-CoA thioester, resulting in the formation of trans-2-enoyl-CoA. Among the different mitochondrial acyl-CoA dehydrogenases, short-chain specific acyl-CoA dehydrogenase acts specifically on acyl-CoAs with saturated 4 to 6 carbons long primary chains. This Mus musculus (Mouse) protein is Short-chain specific acyl-CoA dehydrogenase, mitochondrial (Acads).